The following is a 524-amino-acid chain: Apoptosis inhibitor 5 (524 aa).

Positions 2-360 (PTVEELYRNY…HQLGRKLPDF (359 aa)) are ARM-like and Heat-like helical repeats. Lys251 bears the N6-acetyllysine mark. The segment at 370–391 (LKDFKIRLQYFARGLQVYIRQL) is leucine-zipper. The residue at position 399 (Thr399) is a Phosphothreonine. The tract at residues 452 to 524 (GQKRASEDTT…RGNRSRGRLY (73 aa)) is disordered. The short motif at 454–475 (KRASEDTTSGSPPKKSSAGPKR) is the Nuclear localization signal element. Residues Ser462, Ser464, and Ser469 each carry the phosphoserine modification. Residues 462-472 (SGSPPKKSSAG) are compositionally biased toward low complexity. Over residues 487-497 (KYSSNLGNFNY) the composition is skewed to polar residues. Omega-N-methylarginine is present on Arg500.

This sequence belongs to the API5 family. In terms of assembly, monomer. Interacts with FGF2 and ACIN1. In terms of processing, acetylation at Lys-251 impairs antiapoptotic function. In terms of tissue distribution, expressed in all tissues tested, including heart, brain, placenta, lung, liver, skeletal muscle, kidney and pancreas. Highest levels in heart, pancreas and placenta. Highly expressed in several cancers. Preferentially expressed in squamous cell carcinoma versus adenocarcinoma in non-small cell lung cancer.

It is found in the nucleus. It localises to the cytoplasm. Antiapoptotic factor that may have a role in protein assembly. Negatively regulates ACIN1. By binding to ACIN1, it suppresses ACIN1 cleavage from CASP3 and ACIN1-mediated DNA fragmentation. Also known to efficiently suppress E2F1-induced apoptosis. Its depletion enhances the cytotoxic action of the chemotherapeutic drugs. The chain is Apoptosis inhibitor 5 from Homo sapiens (Human).